Reading from the N-terminus, the 217-residue chain is Putative oxidative stress regulator AosR (217 aa).

The CXXXC signature appears at 5–9; sequence CGRRC. A disulfide bridge links C5 with C9.

This sequence belongs to the AosR family.

The protein is Putative oxidative stress regulator AosR of Mycobacterium leprae (strain TN).